The sequence spans 434 residues: Maintenance of mitochondrial morphology protein 1 (434 aa).

The Lumenal portion of the chain corresponds to 1–105 (MEMSELLASE…SFSSQSFAEG (105 aa)). The helical transmembrane segment at 106–126 (LIVGQLSVIVALIFVIKFFVF) threads the bilayer. Topologically, residues 127–434 (SEGGTKTATA…DDSVSVKSND (308 aa)) are cytoplasmic. The SMP-LTD domain occupies 194-408 (SPESLDWFNV…EPRFQFVKLP (215 aa)). A disordered region spans residues 415–434 (KNTRKEKTDTDDSVSVKSND).

Belongs to the MMM1 family. In terms of assembly, homodimer. Component of the ER-mitochondria encounter structure (ERMES) or MDM complex, composed of MMM1, MDM10, MDM12 and MDM34. An MMM1 homodimer associates with one molecule of MDM12 on each side in a pairwise head-to-tail manner, and the SMP-LTD domains of MMM1 and MDM12 generate a continuous hydrophobic tunnel for phospholipid trafficking.

Its subcellular location is the endoplasmic reticulum membrane. Component of the ERMES/MDM complex, which serves as a molecular tether to connect the endoplasmic reticulum (ER) and mitochondria. Components of this complex are involved in the control of mitochondrial shape and protein biogenesis, and function in nonvesicular lipid trafficking between the ER and mitochondria. The MDM12-MMM1 subcomplex functions in the major beta-barrel assembly pathway that is responsible for biogenesis of all outer membrane beta-barrel proteins, and acts in a late step after the SAM complex. The MDM10-MDM12-MMM1 subcomplex further acts in the TOM40-specific pathway after the action of the MDM12-MMM1 complex. Essential for establishing and maintaining the structure of mitochondria and maintenance of mtDNA nucleoids. The sequence is that of Maintenance of mitochondrial morphology protein 1 from Kluyveromyces lactis (strain ATCC 8585 / CBS 2359 / DSM 70799 / NBRC 1267 / NRRL Y-1140 / WM37) (Yeast).